Consider the following 155-residue polypeptide: Aspartate carbamoyltransferase regulatory chain (155 aa).

Cys112, Cys117, Cys140, and Cys143 together coordinate Zn(2+).

Belongs to the PyrI family. Contains catalytic and regulatory chains. Zn(2+) is required as a cofactor.

Functionally, involved in allosteric regulation of aspartate carbamoyltransferase. This Phocaeicola vulgatus (strain ATCC 8482 / DSM 1447 / JCM 5826 / CCUG 4940 / NBRC 14291 / NCTC 11154) (Bacteroides vulgatus) protein is Aspartate carbamoyltransferase regulatory chain.